The sequence spans 1399 residues: DNA-directed RNA polymerase subunit beta' (1399 aa).

The Zn(2+) site is built by cysteine 70, cysteine 72, cysteine 85, and cysteine 88. The Mg(2+) site is built by aspartate 460, aspartate 462, and aspartate 464. Residues cysteine 814, cysteine 888, cysteine 895, and cysteine 898 each coordinate Zn(2+).

Belongs to the RNA polymerase beta' chain family. In terms of assembly, the RNAP catalytic core consists of 2 alpha, 1 beta, 1 beta' and 1 omega subunit. When a sigma factor is associated with the core the holoenzyme is formed, which can initiate transcription. Mg(2+) is required as a cofactor. Zn(2+) serves as cofactor.

The catalysed reaction is RNA(n) + a ribonucleoside 5'-triphosphate = RNA(n+1) + diphosphate. In terms of biological role, DNA-dependent RNA polymerase catalyzes the transcription of DNA into RNA using the four ribonucleoside triphosphates as substrates. The chain is DNA-directed RNA polymerase subunit beta' from Pseudomonas fluorescens (strain SBW25).